The chain runs to 313 residues: Probable alpha-L-glutamate ligase (313 aa).

The region spanning 112–294 (LQMLMAQGIA…IALQMIVHLE (183 aa)) is the ATP-grasp domain. ATP contacts are provided by residues lysine 148, 185–186 (EF), aspartate 194, and 218–220 (RAN). 3 residues coordinate Mg(2+): aspartate 255, glutamate 267, and asparagine 269. Positions 255, 267, and 269 each coordinate Mn(2+).

Belongs to the RimK family. Mg(2+) serves as cofactor. Requires Mn(2+) as cofactor.

This Pasteurella multocida (strain Pm70) protein is Probable alpha-L-glutamate ligase.